The following is an 816-amino-acid chain: H(+)/Cl(-) exchange transporter 5 (816 aa).

Residues 1 to 124 (MAMWQGAMDN…WALIHSVSDA (124 aa)) are Cytoplasmic-facing. 2 helical membrane-spanning segments follow: residues 125–162 (FSGW…ICTG) and 208–231 (VNYF…VKAF). Residues 237 to 241 (GSGIP) carry the Selectivity filter part_1 motif. Ser-238 contributes to the chloride binding site. The helical intramembrane region spans 240–247 (IPEIKTIL). A run of 2 helical transmembrane segments spans residues 256–275 (LGKW…VSSG) and 281–300 (EGPL…HCFN). Positions 279 to 283 (GKEGP) match the Selectivity filter part_2 motif. Intramembrane regions (helical) lie at residues 312–324 (VLSA…VSVA) and 328–336 (PIGGVLFSL). 5 helical membrane passes run 348-366 (LWRS…RSIN), 389-414 (LVPF…IAWC), 422-442 (LGKY…ILAF), 498-518 (MWQL…TFGM), and 523-542 (GLFI…LGVG). The Selectivity filter part_3 signature appears at 523–527 (GLFIP). Phe-525 lines the chloride pocket. Positions 570–584 (GLYAMVGAAACLGGV) form an intramembrane region, helical. The segment at residues 585–587 (TRM) is an intramembrane region (note=Loop between two helices). Positions 588–599 (TVSLVVIMFELT) form an intramembrane region, helical. Positions 600–604 (GGLEY) form an intramembrane region, note=Loop between two helices. Residues 605-622 (IVPLMAAAMTSKWVADAL) form a helical membrane-spanning segment. Residues 623 to 816 (GREGIYDAHI…NQDPESILFN (194 aa)) lie on the Cytoplasmic side of the membrane. Tyr-628 contributes to the chloride binding site. 2 CBS domains span residues 656–720 (MKPR…ARKK) and 752–811 (ILDL…QDPE). ATP contacts are provided by residues Thr-666, 687–689 (YSG), and 794–797 (TKKD).

This sequence belongs to the chloride channel (TC 2.A.49) family. ClC-5/CLCN5 subfamily. Interacts with NEDD4 and NEDD4L. In terms of processing, ubiquitinated by NEDD4L in the presence of albumin; which promotes endocytosis and proteasomal degradation. Kidney specific.

It localises to the golgi apparatus membrane. It is found in the endosome membrane. Its subcellular location is the cell membrane. The enzyme catalyses 2 chloride(in) + H(+)(out) = 2 chloride(out) + H(+)(in). In terms of biological role, proton-coupled chloride transporter. Functions as antiport system and exchanges chloride ions against protons. Important for normal acidification of the endosome lumen. May play an important role in renal tubular function. The CLC channel family contains both chloride channels and proton-coupled anion transporters that exchange chloride or another anion for protons. The absence of conserved gating glutamate residues is typical for family members that function as channels. The chain is H(+)/Cl(-) exchange transporter 5 (Clcn5) from Rattus norvegicus (Rat).